Here is a 257-residue protein sequence, read N- to C-terminus: OCIA domain-containing protein 1 (257 aa).

2 disordered regions span residues M1–L20 and Y148–D257. Residues M1–E110 enclose the OCIA domain. A compositionally biased stretch (polar residues) spans G156–T170. Positions E204 to K216 are enriched in basic and acidic residues.

Belongs to the OCIAD1 family. Interacts with STAT3 and ARF1. As to expression, expressed in all cells of the primary lymph gland lobe.

It localises to the endosome. In terms of biological role, maintains stem cell potency. Involved in endocytic pathways that mediate signaling during hematopoiesis. The sequence is that of OCIA domain-containing protein 1 (asrij) from Drosophila melanogaster (Fruit fly).